Reading from the N-terminus, the 247-residue chain is UPF0259 membrane protein BUAP5A_271 (247 aa).

6 consecutive transmembrane segments (helical) span residues 20-40, 85-105, 114-134, 137-157, 188-208, and 218-238; these read IGAIFFISIFATFMNILIDMF, IMESLISKTTLLGSIIILISV, IVSSIRTFFLFFPSLFILNFL, FIIQIGFMLLIIPGILLSIIL, IIGPGVLFWMCGKFILTMLLA, and LFLISNISMNILFSILIIYLF.

The protein belongs to the UPF0259 family.

Its subcellular location is the cell membrane. The polypeptide is UPF0259 membrane protein BUAP5A_271 (Buchnera aphidicola subsp. Acyrthosiphon pisum (strain 5A)).